Reading from the N-terminus, the 59-residue chain is Potassium channel toxin alpha-KTx 3.10 (59 aa).

A signal peptide spans methionine 1–glycine 22. Cystine bridges form between cysteine 30-cysteine 50, cysteine 36-cysteine 55, and cysteine 40-cysteine 57.

The protein belongs to the short scorpion toxin superfamily. Potassium channel inhibitor family. Alpha-KTx 03 subfamily. In terms of tissue distribution, expressed by the venom gland.

It is found in the secreted. Its function is as follows. Inhibits insect potassium channel. Is at least a 100-fold more potent against the Drosophila Shaker channel than towards its mammalian homologs Kv1.1/KCNA1 and Kv1.3/KCNA3. In Buthus israelis (Israeli scorpion), this protein is Potassium channel toxin alpha-KTx 3.10.